Reading from the N-terminus, the 338-residue chain is Tryptophan--tRNA ligase (338 aa).

ATP is bound by residues 11-13 (QPS) and 19-20 (GN). A 'HIGH' region motif is present at residues 12–20 (PSGELSIGN). An L-tryptophan-binding site is contributed by Asp-135. ATP is bound by residues 147-149 (GSD), Val-189, and 198-202 (KMSKS). The 'KMSKS' region motif lies at 198–202 (KMSKS).

Belongs to the class-I aminoacyl-tRNA synthetase family. Homodimer.

The protein resides in the cytoplasm. It catalyses the reaction tRNA(Trp) + L-tryptophan + ATP = L-tryptophyl-tRNA(Trp) + AMP + diphosphate + H(+). Catalyzes the attachment of tryptophan to tRNA(Trp). The protein is Tryptophan--tRNA ligase of Vibrio cholerae serotype O1 (strain ATCC 39315 / El Tor Inaba N16961).